A 135-amino-acid polypeptide reads, in one-letter code: Large ribosomal subunit protein uL18c (135 aa).

This sequence belongs to the universal ribosomal protein uL18 family. Part of the 50S ribosomal subunit; contacts the 5S rRNA.

It localises to the plastid. The protein resides in the chloroplast. In terms of biological role, binds 5S rRNA, forms part of the central protuberance of the 50S subunit. The polypeptide is Large ribosomal subunit protein uL18c (rpl18) (Phaeodactylum tricornutum (strain CCAP 1055/1)).